We begin with the raw amino-acid sequence, 1192 residues long: Plakophilin-4 (1192 aa).

The segment at 1-31 (MPAPEQASLVEEGQPQTRQEAASTGPGMEPE) is disordered. Positions 36–70 (TILASVKEQELQFQRLTRELEVERQIVASQLERCR) form a coiled coil. Residues 73–262 (AESPSIASTS…PRPLNPSAYS (190 aa)) form a disordered region. S75 carries the phosphoserine modification. A compositionally biased stretch (polar residues) spans 77-86 (SIASTSSTEK). The residue at position 84 (T84) is a Phosphothreonine. Residues S106, S132, S136, and S139 each carry the phosphoserine modification. 3 stretches are compositionally biased toward polar residues: residues 138–156 (GSLG…SDSG), 163–204 (FHNS…QPSV), and 214–230 (SVPS…STGV). 3 positions are modified to phosphoserine: S221, S231, and S236. Residues 231-242 (SPSRGSLRTSLG) show a composition bias toward low complexity. Residues R254 and R270 each carry the omega-N-methylarginine modification. Phosphoserine occurs at positions 273 and 281. Residues 290–310 (SVTSRQTSNPNGPTPQYQTTA) are disordered. 3 positions are modified to phosphoserine: S314, S327, and S337. Residues 323–348 (TRVASPSQGQVGSSSPKRSGMTAVPQ) are disordered. The span at 325–338 (VASPSQGQVGSSSP) shows a compositional bias: low complexity. At Y372 the chain carries Phosphotyrosine. Phosphoserine is present on residues S392, S403, and S406. At T412 the chain carries Phosphothreonine. A Phosphotyrosine modification is found at Y415. An ARM 1 repeat occupies 415 to 455 (YEGRTYYSPVYRSPNHGTVELQGSQTALYRTGSVGIGNLQR). A phosphoserine mark is found at S422, S427, and S438. Y478 carries the post-translational modification Phosphotyrosine. A phosphoserine mark is found at S510, S512, and S515. ARM repeat units follow at residues 518–557 (KDPR…HLCF), 560–599 (NKVK…NLVF), 604–644 (DENK…NLSS), 660–702 (LTNT…NLSS), and 706–751 (EARK…NLSY). The span at 773 to 782 (GKESPSKDSE) shows a compositional bias: basic and acidic residues. Residues 773–810 (GKESPSKDSEPSCWGKKKKKKKRTPQEDQWDGVGPIPG) form a disordered region. S776 bears the Phosphoserine mark. ARM repeat units follow at residues 815–855 (PKGV…NLSA), 862–901 (AYIR…NMAL), and 950–993 (MENA…TLWQ). 2 positions are modified to phosphothreonine: T1013 and T1017. S1045 is modified (phosphoserine). Residues 1058–1086 (PRSEYDRTQPPMQYYNSQGDATHKGLYPG) form a disordered region. Polar residues predominate over residues 1067–1077 (PPMQYYNSQGD). Phosphoserine occurs at positions 1091, 1100, and 1135.

The protein belongs to the beta-catenin family. In terms of assembly, interacts with PDZD2. Interacts (via the C-terminus) with FRMPD2 (via the PDZ 2 domain). Interacts with RHOA; the interaction is detected at the midbody. Interacts with ECT2; the interaction is detected at the midbody. Interacts with CCDC85B. In terms of tissue distribution, expressed in salivary glands (at protein level). Expressed in arrector pili muscle (at protein level).

The protein resides in the cell junction. The protein localises to the desmosome. It localises to the cytoplasm. Its subcellular location is the cytoskeleton. It is found in the spindle. The protein resides in the midbody. The protein localises to the cell membrane. Its function is as follows. Plays a role as a regulator of Rho activity during cytokinesis. May play a role in junctional plaques. The polypeptide is Plakophilin-4 (PKP4) (Homo sapiens (Human)).